The primary structure comprises 858 residues: Elongation factor 2 (858 aa).

A tr-type G domain is found at 17–362 (ANIRNMSVIA…MITIHLPSPV (346 aa)). A GTP-binding site is contributed by 26 to 33 (AHVDHGKS). A Phosphothreonine modification is found at T54. At T57 the chain carries Phosphothreonine; by EEF2K. Residue T59 is modified to Phosphothreonine. K152 is modified (N6-succinyllysine). GTP contacts are provided by residues 158–161 (NKMD) and 216–218 (SGL). K235 is modified (N6-acetyllysine). N6-acetyllysine; alternate is present on K239. K239 participates in a covalent cross-link: Glycyl lysine isopeptide (Lys-Gly) (interchain with G-Cter in SUMO1); alternate. A Phosphotyrosine; by CSK modification is found at Y265. K272 is subject to N6-acetyllysine; alternate. K272 is modified (N6-succinyllysine; alternate). The residue at position 275 (K275) is an N6-acetyllysine. Residue K322 forms a Glycyl lysine isopeptide (Lys-Gly) (interchain with G-Cter in SUMO) linkage. The residue at position 325 (S325) is a Phosphoserine. Y373 is modified (phosphotyrosine; by CSK). T435 carries the post-translational modification Phosphothreonine. Residues K439 and K445 each carry the N6-acetyllysine modification. S502 carries the phosphoserine modification. Position 525 is an N6,N6,N6-trimethyllysine; by EEF2KMT (K525). Residue K529 forms a Glycyl lysine isopeptide (Lys-Gly) (interchain with G-Cter in SUMO) linkage. N6-succinyllysine is present on K572. S595 carries the phosphoserine; by CDK2 modification. K619 carries the post-translational modification N6-acetyllysine. H715 bears the Diphthamide mark.

Belongs to the TRAFAC class translation factor GTPase superfamily. Classic translation factor GTPase family. EF-G/EF-2 subfamily. In terms of assembly, binds to 80S ribosomes. Actively translating ribosomes show mutually exclusive binding of eIF5a (EIF5A or EIF5A2) and EEF2/eEF2. Interacts with SERBP1; interaction sequesters EEF2/eEF2 at the A-site of the ribosome, thereby blocking the interaction sites of the mRNA-tRNA complex, promoting ribosome stabilization and hibernation. Interacts with HABP4; interaction takes place at the A-site of hibernating ribosomes and promotes ribosome stabilization. Component of the mRNA surveillance SURF complex, at least composed of ERF1, ERF3 (ERF3A or ERF3B), EEF2, UPF1/RENT1, SMG1, SMG8 and SMG9. Interacts with RBPMS2. Post-translationally, diphthamide is 2-[3-carboxyamido-3-(trimethyl-ammonio)propyl]histidine. In terms of processing, phosphorylation by EF-2 kinase completely inactivates EF-2; it requires prior phosphorylation by CDK2 at Ser-595 during mitotic prometaphase. Phosphorylation by CSK promotes SUMOylation, proteolytic cleavage, and nuclear translocation if the C-terminal fragment. Proteolytically processed at two sites following phosphorylation by CSK. Post-translationally, SUMOylated following phosphorylation by CSK, promotes proteolytic cleavage. In terms of processing, ISGylated.

It is found in the cytoplasm. Its subcellular location is the nucleus. It carries out the reaction GTP + H2O = GDP + phosphate + H(+). In terms of biological role, catalyzes the GTP-dependent ribosomal translocation step during translation elongation. During this step, the ribosome changes from the pre-translocational (PRE) to the post-translocational (POST) state as the newly formed A-site-bound peptidyl-tRNA and P-site-bound deacylated tRNA move to the P and E sites, respectively. Catalyzes the coordinated movement of the two tRNA molecules, the mRNA and conformational changes in the ribosome. The chain is Elongation factor 2 (Eef2) from Rattus norvegicus (Rat).